Reading from the N-terminus, the 497-residue chain is Glucose-6-phosphate isomerase (497 aa).

Glutamate 350 functions as the Proton donor in the catalytic mechanism. Catalysis depends on residues histidine 381 and lysine 485.

It belongs to the GPI family.

The protein localises to the cytoplasm. The catalysed reaction is alpha-D-glucose 6-phosphate = beta-D-fructose 6-phosphate. Its pathway is carbohydrate biosynthesis; gluconeogenesis. The protein operates within carbohydrate degradation; glycolysis; D-glyceraldehyde 3-phosphate and glycerone phosphate from D-glucose: step 2/4. In terms of biological role, catalyzes the reversible isomerization of glucose-6-phosphate to fructose-6-phosphate. This is Glucose-6-phosphate isomerase from Legionella pneumophila.